Reading from the N-terminus, the 291-residue chain is 4-hydroxy-tetrahydrodipicolinate synthase (291 aa).

Threonine 44 serves as a coordination point for pyruvate. The Proton donor/acceptor role is filled by tyrosine 132. The active-site Schiff-base intermediate with substrate is the lysine 160. Residue isoleucine 202 participates in pyruvate binding.

Belongs to the DapA family. In terms of assembly, homotetramer; dimer of dimers.

The protein localises to the cytoplasm. The catalysed reaction is L-aspartate 4-semialdehyde + pyruvate = (2S,4S)-4-hydroxy-2,3,4,5-tetrahydrodipicolinate + H2O + H(+). The protein operates within amino-acid biosynthesis; L-lysine biosynthesis via DAP pathway; (S)-tetrahydrodipicolinate from L-aspartate: step 3/4. In terms of biological role, catalyzes the condensation of (S)-aspartate-beta-semialdehyde [(S)-ASA] and pyruvate to 4-hydroxy-tetrahydrodipicolinate (HTPA). The protein is 4-hydroxy-tetrahydrodipicolinate synthase of Parvibaculum lavamentivorans (strain DS-1 / DSM 13023 / NCIMB 13966).